The chain runs to 233 residues: Probable septum site-determining protein MinC (233 aa).

Residues 98-123 (LTEGKEKAPRPAPSEPTPPPPPVANQ) form a disordered region. The span at 107–120 (RPAPSEPTPPPPPV) shows a compositional bias: pro residues.

Belongs to the MinC family. In terms of assembly, interacts with MinD and FtsZ.

Functionally, cell division inhibitor that blocks the formation of polar Z ring septums. Rapidly oscillates between the poles of the cell to destabilize FtsZ filaments that have formed before they mature into polar Z rings. Prevents FtsZ polymerization. In Klebsiella pneumoniae (strain 342), this protein is Probable septum site-determining protein MinC.